A 359-amino-acid chain; its full sequence is Peptide chain release factor 1 (359 aa).

Glutamine 235 carries the N5-methylglutamine modification. The segment at 285-305 (KRDSEISQMRKSQIGSGDRSE) is disordered. Over residues 290–299 (ISQMRKSQIG) the composition is skewed to polar residues.

The protein belongs to the prokaryotic/mitochondrial release factor family. Post-translationally, methylated by PrmC. Methylation increases the termination efficiency of RF1.

It is found in the cytoplasm. Functionally, peptide chain release factor 1 directs the termination of translation in response to the peptide chain termination codons UAG and UAA. This is Peptide chain release factor 1 from Ehrlichia canis (strain Jake).